We begin with the raw amino-acid sequence, 369 residues long: Anhydro-N-acetylmuramic acid kinase (369 aa).

Position 12–19 (12–19) interacts with ATP; sequence GTSLDGVD.

This sequence belongs to the anhydro-N-acetylmuramic acid kinase family.

It carries out the reaction 1,6-anhydro-N-acetyl-beta-muramate + ATP + H2O = N-acetyl-D-muramate 6-phosphate + ADP + H(+). The protein operates within amino-sugar metabolism; 1,6-anhydro-N-acetylmuramate degradation. Its pathway is cell wall biogenesis; peptidoglycan recycling. Catalyzes the specific phosphorylation of 1,6-anhydro-N-acetylmuramic acid (anhMurNAc) with the simultaneous cleavage of the 1,6-anhydro ring, generating MurNAc-6-P. Is required for the utilization of anhMurNAc either imported from the medium or derived from its own cell wall murein, and thus plays a role in cell wall recycling. The protein is Anhydro-N-acetylmuramic acid kinase of Escherichia coli O45:K1 (strain S88 / ExPEC).